The following is a 239-amino-acid chain: Probable transcriptional regulatory protein ABO_1803 (239 aa).

The protein belongs to the TACO1 family.

The protein resides in the cytoplasm. The protein is Probable transcriptional regulatory protein ABO_1803 of Alcanivorax borkumensis (strain ATCC 700651 / DSM 11573 / NCIMB 13689 / SK2).